The primary structure comprises 483 residues: Endoplasmic reticulum lectin 1 (483 aa).

An N-terminal signal peptide occupies residues methionine 1–alanine 33. 2 consecutive MRH domains span residues serine 111–histidine 246 and serine 342–isoleucine 469. Cysteine 113 and cysteine 126 form a disulfide bridge. N-linked (GlcNAc...) asparagine glycosylation occurs at asparagine 195. Cystine bridges form between cysteine 199/cysteine 232, cysteine 215/cysteine 244, cysteine 344/cysteine 357, cysteine 421/cysteine 455, and cysteine 436/cysteine 467.

In terms of assembly, may form a complex with OS9, HSPA5, SYVN1, and SEL1L with which it interacts directly. Interacts (via PRKCSH 2 domain) with KREMEN2 (when glycosylated). Interacts with HSPA5. Isoform 1 and isoform 2 are N-glycosylated.

It localises to the endoplasmic reticulum lumen. Probable lectin that binds selectively to improperly folded lumenal proteins. May function in endoplasmic reticulum quality control and endoplasmic reticulum-associated degradation (ERAD) of both non-glycosylated proteins and glycoproteins. The sequence is that of Endoplasmic reticulum lectin 1 (ERLEC1) from Homo sapiens (Human).